A 384-amino-acid chain; its full sequence is S-adenosylmethionine synthase (384 aa).

ATP is bound at residue H16. Residue D18 participates in Mg(2+) binding. Residue E44 participates in K(+) binding. Residues E57 and Q100 each contribute to the L-methionine site. A flexible loop region spans residues 100–110; it reads QSADIAMGVDE. Residues 165–167, D240, 246–247, A263, and K267 contribute to the ATP site; these read DAK and RK. D240 is a binding site for L-methionine. L-methionine is bound at residue K271.

Belongs to the AdoMet synthase family. Homotetramer; dimer of dimers. Mg(2+) is required as a cofactor. Requires K(+) as cofactor.

It is found in the cytoplasm. The catalysed reaction is L-methionine + ATP + H2O = S-adenosyl-L-methionine + phosphate + diphosphate. Its pathway is amino-acid biosynthesis; S-adenosyl-L-methionine biosynthesis; S-adenosyl-L-methionine from L-methionine: step 1/1. Catalyzes the formation of S-adenosylmethionine (AdoMet) from methionine and ATP. The overall synthetic reaction is composed of two sequential steps, AdoMet formation and the subsequent tripolyphosphate hydrolysis which occurs prior to release of AdoMet from the enzyme. The chain is S-adenosylmethionine synthase from Teredinibacter turnerae (strain ATCC 39867 / T7901).